The primary structure comprises 78 residues: Small ribosomal subunit protein bS18 (78 aa).

The protein belongs to the bacterial ribosomal protein bS18 family. In terms of assembly, part of the 30S ribosomal subunit. Forms a tight heterodimer with protein bS6.

Its function is as follows. Binds as a heterodimer with protein bS6 to the central domain of the 16S rRNA, where it helps stabilize the platform of the 30S subunit. The chain is Small ribosomal subunit protein bS18 from Ligilactobacillus salivarius (strain UCC118) (Lactobacillus salivarius).